The primary structure comprises 354 residues: Molybdenum import ATP-binding protein ModC (354 aa).

Residues 1 to 229 (MLELDFEQQL…SALRLWLQKE (229 aa)) enclose the ABC transporter domain. An ATP-binding site is contributed by 31 to 38 (GLSGAGKT). The 66-residue stretch at 289-354 (GSSIRNILAV…IKSVSFHRQL (66 aa)) folds into the Mop domain.

It belongs to the ABC transporter superfamily. Molybdate importer (TC 3.A.1.8) family. The complex is composed of two ATP-binding proteins (ModC), two transmembrane proteins (ModB) and a solute-binding protein (ModA).

The protein localises to the cell inner membrane. It catalyses the reaction molybdate(out) + ATP + H2O = molybdate(in) + ADP + phosphate + H(+). Functionally, part of the ABC transporter complex ModABC involved in molybdenum import. Responsible for energy coupling to the transport system. This chain is Molybdenum import ATP-binding protein ModC, found in Photorhabdus laumondii subsp. laumondii (strain DSM 15139 / CIP 105565 / TT01) (Photorhabdus luminescens subsp. laumondii).